Consider the following 205-residue polypeptide: tRNA (pseudouridine(54)-N(1))-methyltransferase (205 aa).

Residues leucine 136, glycine 156, 179–184 (LSPLEL), and cysteine 189 each bind S-adenosyl-L-methionine.

Belongs to the methyltransferase superfamily. TrmY family. Homodimer.

Its subcellular location is the cytoplasm. It carries out the reaction pseudouridine(54) in tRNA + S-adenosyl-L-methionine = N(1)-methylpseudouridine(54) in tRNA + S-adenosyl-L-homocysteine + H(+). Specifically catalyzes the N1-methylation of pseudouridine at position 54 (Psi54) in tRNAs. The polypeptide is tRNA (pseudouridine(54)-N(1))-methyltransferase (Methanocaldococcus jannaschii (strain ATCC 43067 / DSM 2661 / JAL-1 / JCM 10045 / NBRC 100440) (Methanococcus jannaschii)).